The following is a 1056-amino-acid chain: PAX-interacting protein 1 (1056 aa).

BRCT domains are found at residues 8–93 (VPEE…GFSP) and 94–183 (ESCQ…FYHP). Residues 94 to 183 (ESCQIFFGLT…RRKDEAFYHP (90 aa)) are interaction with PAGR1. Acidic residues predominate over residues 188–205 (YEEEEEEEEEGDNEEQDS). Disordered regions lie at residues 188-276 (YEEE…QRRL), 393-412 (THVL…HPAL), and 419-486 (MQLQ…FQQQ). A compositionally biased stretch (low complexity) spans 214-223 (SSVASSAVAS). 2 positions are modified to phosphoserine: serine 223 and serine 230. Low complexity-rich tracts occupy residues 396–412 (LQQH…HPAL), 419–435 (MQLQ…QQQP), and 445–486 (QFPQ…FQQQ). Residues 577-1056 (QLFGHDPAVE…TLDYESYKFN (480 aa)) form an interaction with TP53BP1 region. BRCT domains follow at residues 588–681 (PEES…RALH), 688–776 (PGGK…VQYS), 853–934 (TPLV…NYIL), and 955–989 (HVSP…GGKV). The short motif at 655-672 (RKRCVTAHWLNTVLKKKK) is the Nuclear localization signal element.

As to quaternary structure, interacts with the C-terminal transactivation domain of PAX2. Forms a constitutive complex with PAGR1 independently of the MLL2/MLL3 complex. Interacts with TP53BP1 (when phosphorylated at the N-terminus by ATM). Interacts with HLTF. Component of the KMT2 family MLL2/MLL3 complex (also named ASCOM complex), at least composed of the HMTs KMT2D and/or KMT2C, the common subunits ASH2L, RBBP5, WDR5 and DPY30, and the complex type-specific subunits PAXIP1/PTIP, PAGR1, NCOA6 and KDM6A; required for the association of PAGR1 with the MLL2/MLL3 complex. Interacts with NUPR1; this interaction prevents PAXIP1 inhibition of PAX2 transcription factor activity. In terms of tissue distribution, expression detected in all tissues examined, including brain stem, cerebellum, cortex, heart, spleen, kidney, liver, thymus and lung.

The protein resides in the nucleus matrix. It is found in the chromosome. Involved in DNA damage response and in transcriptional regulation through histone methyltransferase (HMT) complexes such as the MLL2/MLL3 complex. Plays a role in early development. In DNA damage response is required for cell survival after ionizing radiation. In vitro shown to be involved in the homologous recombination mechanism for the repair of double-strand breaks (DSBs). Its localization to DNA damage foci requires Rnf8 and Ube2n. Recruits Tp53bp1 to DNA damage foci and, at least in particular repair processes, effective DNA damage response appears to require the association with Tp53bp1 phosphorylated by Atm. Together with Tp53bp1 regulates Atm association. Proposed to recruit Pagr1 to sites of DNA damage and the Pagr1:Paxip1 complex is required for cell survival in response to DNA damage independently of the MLL2/MLL3 complex. However, this function has been questioned. Promotes ubiquitination of PCNA following UV irradiation and may regulate recruitment of polymerase eta and Rad51 to chromatin after DNA damage. Proposed to be involved in transcriptional regulation by linking MLL-containing histone methyltransferase (HMT) complexes to gene promoters by interacting with promoter-bound transcription factors such as Pax2. Associates with gene promoters that are known to be regulated by Kmt2d/Mll2. During immunoglobulin class switching in activated B-cells is involved in trimethylation of histone H3 at 'Lys-4' and in transcription initiation of downstream switch regions at the immunoglobulin heavy-chain (Igh) locus; this function appears to involve the recruitment of MLL-containing HMT complexes. Conflictingly, its function in transcriptional regulation during immunoglobulin class switching is reported to be independent of the MLL2/MLL3 complex. The chain is PAX-interacting protein 1 (Paxip1) from Mus musculus (Mouse).